A 149-amino-acid chain; its full sequence is FAD synthase (149 aa).

ATP-binding positions include 15 to 16, 20 to 23, and aspartate 101; these read VF and HVGH.

This sequence belongs to the archaeal FAD synthase family. In terms of assembly, homodimer. The cofactor is a divalent metal cation.

It carries out the reaction FMN + ATP + H(+) = FAD + diphosphate. Its pathway is cofactor biosynthesis; FAD biosynthesis; FAD from FMN: step 1/1. Functionally, catalyzes the transfer of the AMP portion of ATP to flavin mononucleotide (FMN) to produce flavin adenine dinucleotide (FAD) coenzyme. This Thermococcus kodakarensis (strain ATCC BAA-918 / JCM 12380 / KOD1) (Pyrococcus kodakaraensis (strain KOD1)) protein is FAD synthase.